A 769-amino-acid polypeptide reads, in one-letter code: Integrin beta-2 (769 aa).

An N-terminal signal peptide occupies residues 1-22 (MLRQRPQLLLLAGLLALQSVLS). At Gln-23 the chain carries Pyrrolidone carboxylic acid. Residues 23 to 700 (QECTNYKVST…DMLECVKGPN (678 aa)) lie on the Extracellular side of the membrane. The region spanning 24-74 (ECTNYKVSTCRDCIESGPGCAWCQKLNFTGQGEPDSIRCDTRAELLSKGCP) is the PSI domain. Disulfide bonds link Cys-25-Cys-43, Cys-33-Cys-447, Cys-36-Cys-62, Cys-46-Cys-73, Cys-191-Cys-198, Cys-246-Cys-286, Cys-386-Cys-400, Cys-420-Cys-445, Cys-449-Cys-467, Cys-459-Cys-470, Cys-472-Cys-481, Cys-483-Cys-514, Cys-497-Cys-512, Cys-506-Cys-517, Cys-519-Cys-534, Cys-536-Cys-559, Cys-541-Cys-557, Cys-549-Cys-562, Cys-564-Cys-573, Cys-575-Cys-598, Cys-582-Cys-596, Cys-590-Cys-601, Cys-603-Cys-612, Cys-615-Cys-618, Cys-622-Cys-662, Cys-628-Cys-647, Cys-631-Cys-643, and Cys-670-Cys-695. N-linked (GlcNAc...) asparagine glycosylation is found at Asn-50 and Asn-116. In terms of domain architecture, VWFA spans 124-363 (GYPIDLYYLM…ELIKNAYNKL (240 aa)). 2 residues coordinate Mg(2+): Ser-136 and Ser-138. Ser-138, Asp-141, Asp-142, and Asp-173 together coordinate Ca(2+). 4 residues coordinate Ca(2+): Asn-229, Asp-231, Pro-233, and Glu-234. Residue Glu-234 participates in Mg(2+) binding. An N-linked (GlcNAc...) asparagine glycan is attached at Asn-254. Positions 264 and 347 each coordinate Ca(2+). A Cell attachment site motif is present at residues 397–399 (RGD). 4 I-EGF domains span residues 449–482 (CRDA…KNCE), 483–535 (CQTQ…QFCE), 536–574 (CDNV…SACQ), and 575–613 (CLKS…PLCS). The N-linked (GlcNAc...) asparagine glycan is linked to Asn-501. A glycan (N-linked (GlcNAc...) asparagine) is linked at Asn-642. Residues 701 to 723 (IAAIVGGTVGGVVLVGILLLVIW) traverse the membrane as a helical segment. Residues 724 to 769 (KALTHLSDLREYHRFEKEKLKSQWNNDNPLFKSATTTVMNPKFAES) are Cytoplasmic-facing. Phosphoserine is present on residues Ser-745 and Ser-756. A phosphothreonine mark is found at Thr-758 and Thr-760.

The protein belongs to the integrin beta chain family. Heterodimer of an alpha and a beta subunit. The ITGB2 beta subunit associates with the ITGAL, ITGAM, ITGAX or ITGAD alpha subunits. Found in a complex with CD177 and ITGAM/CD11b. Interacts with FGR. Interacts with COPS5 and RANBP9. Interacts with FLNA (via filamin repeats 4, 9, 12, 17, 19, 21, and 23). Interacts with THBD. Post-translationally, both Ser-745 and Ser-756 become phosphorylated when T-cells are exposed to phorbol esters. Phosphorylation on Thr-758 (but not on Ser-756) allows interaction with 14-3-3 proteins.

It localises to the cell membrane. It is found in the membrane raft. In terms of biological role, integrin ITGAL/ITGB2 is a receptor for ICAM1, ICAM2, ICAM3 and ICAM4. Integrin ITGAL/ITGB2 is also a receptor for the secreted form of ubiquitin-like protein ISG15; the interaction is mediated by ITGAL. Integrins ITGAM/ITGB2 and ITGAX/ITGB2 are receptors for the iC3b fragment of the third complement component and for fibrinogen. Integrin ITGAX/ITGB2 recognizes the sequence G-P-R in fibrinogen alpha-chain. Integrin ITGAM/ITGB2 recognizes P1 and P2 peptides of fibrinogen gamma chain. Integrin ITGAM/ITGB2 is also a receptor for factor X. Integrin ITGAD/ITGB2 is a receptor for ICAM3 and VCAM1. Contributes to natural killer cell cytotoxicity. Involved in leukocyte adhesion and transmigration of leukocytes including T-cells and neutrophils. Triggers neutrophil transmigration during lung injury through PTK2B/PYK2-mediated activation. Integrin ITGAL/ITGB2 in association with ICAM3, contributes to apoptotic neutrophil phagocytosis by macrophages. The chain is Integrin beta-2 (ITGB2) from Bos taurus (Bovine).